Here is a 205-residue protein sequence, read N- to C-terminus: SREBP regulating gene protein (205 aa).

The Cytoplasmic segment spans residues 1–16; sequence MVPCGAVLWRRLLRKR. A helical membrane pass occupies residues 17–35; it reads WVLGVVFGLSLVYFLSSTF. Over 36 to 205 the chain is Lumenal; sequence KQEERTVRDR…GEYPPELLPV (170 aa). A glycan (N-linked (GlcNAc...) asparagine) is linked at Asn67.

The protein belongs to the SPRING family.

It localises to the golgi apparatus membrane. In terms of biological role, positively regulates hepatic SREBP signaling pathway by modulating the proper localization of SCAP (SREBP cleavage-activating protein) to the endoplasmic reticulum, thereby controlling the level of functional SCAP. The sequence is that of SREBP regulating gene protein from Gallus gallus (Chicken).